Here is a 184-residue protein sequence, read N- to C-terminus: MFCLLHLCFYLANFASSIKRTHAVNGCCGLQMIALWAQSSGNADARVEEILAGEERRLAALLGSQGMRFWVCLAACRAMWGLAARRGRAEDSSSSPVDASKFPWRGGQHRTTMMPCLLRVGVFRPCHVRPTGDPSCDVQPPRLGFSRVPDTQVAFYGSGHWDPTPFSVHSCFFNFQVRKIIFLL.

The signal sequence occupies residues 1 to 23; that stretch reads MFCLLHLCFYLANFASSIKRTHA.

The protein resides in the secreted. This is an uncharacterized protein from Homo sapiens (Human).